The sequence spans 345 residues: 3-dehydroquinate synthase (345 aa).

The protein belongs to the archaeal-type DHQ synthase family.

It catalyses the reaction 2-amino-2,3,7-trideoxy-D-lyxo-hept-6-ulosonate + NAD(+) + H2O = 3-dehydroquinate + NH4(+) + NADH + H(+). Its function is as follows. Catalyzes the oxidative deamination and cyclization of 2-amino-3,7-dideoxy-D-threo-hept-6-ulosonic acid (ADH) to yield 3-dehydroquinate (DHQ), which is fed into the canonical shikimic pathway of aromatic amino acid biosynthesis. In Methanocorpusculum labreanum (strain ATCC 43576 / DSM 4855 / Z), this protein is 3-dehydroquinate synthase.